A 430-amino-acid polypeptide reads, in one-letter code: Tyrosine--tRNA ligase (430 aa).

L-tyrosine is bound at residue Y32. Positions 37-46 (PTADSLHIGH) match the 'HIGH' region motif. The L-tyrosine site is built by Y172 and Q176. Residues 232 to 236 (KFGKT) carry the 'KMSKS' region motif. K235 is an ATP binding site. The 68-residue stretch at 362 to 429 (VKAVDLFVDN…GKKNYFLLIA (68 aa)) folds into the S4 RNA-binding domain.

This sequence belongs to the class-I aminoacyl-tRNA synthetase family. TyrS type 1 subfamily. In terms of assembly, homodimer.

It is found in the cytoplasm. It catalyses the reaction tRNA(Tyr) + L-tyrosine + ATP = L-tyrosyl-tRNA(Tyr) + AMP + diphosphate + H(+). Its function is as follows. Catalyzes the attachment of tyrosine to tRNA(Tyr) in a two-step reaction: tyrosine is first activated by ATP to form Tyr-AMP and then transferred to the acceptor end of tRNA(Tyr). The protein is Tyrosine--tRNA ligase of Bacteroides thetaiotaomicron (strain ATCC 29148 / DSM 2079 / JCM 5827 / CCUG 10774 / NCTC 10582 / VPI-5482 / E50).